The following is a 195-amino-acid chain: Pyridoxal 5'-phosphate synthase subunit PdxT (195 aa).

46–48 (GES) contacts L-glutamine. The active-site Nucleophile is the Cys-78. Residues Arg-106 and 134–135 (IR) contribute to the L-glutamine site. Residues His-170 and Glu-172 each act as charge relay system in the active site.

It belongs to the glutaminase PdxT/SNO family. As to quaternary structure, in the presence of PdxS, forms a dodecamer of heterodimers. Only shows activity in the heterodimer.

The enzyme catalyses aldehydo-D-ribose 5-phosphate + D-glyceraldehyde 3-phosphate + L-glutamine = pyridoxal 5'-phosphate + L-glutamate + phosphate + 3 H2O + H(+). It catalyses the reaction L-glutamine + H2O = L-glutamate + NH4(+). It participates in cofactor biosynthesis; pyridoxal 5'-phosphate biosynthesis. Functionally, catalyzes the hydrolysis of glutamine to glutamate and ammonia as part of the biosynthesis of pyridoxal 5'-phosphate. The resulting ammonia molecule is channeled to the active site of PdxS. This is Pyridoxal 5'-phosphate synthase subunit PdxT from Pseudothermotoga lettingae (strain ATCC BAA-301 / DSM 14385 / NBRC 107922 / TMO) (Thermotoga lettingae).